The primary structure comprises 216 residues: Ribosomal RNA small subunit methyltransferase G (216 aa).

S-adenosyl-L-methionine contacts are provided by residues G83, M88, 134 to 135, and R149; that span reads VE.

The protein belongs to the methyltransferase superfamily. RNA methyltransferase RsmG family.

The protein resides in the cytoplasm. The catalysed reaction is guanosine(527) in 16S rRNA + S-adenosyl-L-methionine = N(7)-methylguanosine(527) in 16S rRNA + S-adenosyl-L-homocysteine. Functionally, specifically methylates the N7 position of guanine in position 527 of 16S rRNA. This chain is Ribosomal RNA small subunit methyltransferase G, found in Pseudomonas putida (strain GB-1).